The sequence spans 210 residues: Leucyl/phenylalanyl-tRNA--protein transferase (210 aa).

This sequence belongs to the L/F-transferase family.

Its subcellular location is the cytoplasm. It carries out the reaction N-terminal L-lysyl-[protein] + L-leucyl-tRNA(Leu) = N-terminal L-leucyl-L-lysyl-[protein] + tRNA(Leu) + H(+). The enzyme catalyses N-terminal L-arginyl-[protein] + L-leucyl-tRNA(Leu) = N-terminal L-leucyl-L-arginyl-[protein] + tRNA(Leu) + H(+). It catalyses the reaction L-phenylalanyl-tRNA(Phe) + an N-terminal L-alpha-aminoacyl-[protein] = an N-terminal L-phenylalanyl-L-alpha-aminoacyl-[protein] + tRNA(Phe). Its function is as follows. Functions in the N-end rule pathway of protein degradation where it conjugates Leu, Phe and, less efficiently, Met from aminoacyl-tRNAs to the N-termini of proteins containing an N-terminal arginine or lysine. The chain is Leucyl/phenylalanyl-tRNA--protein transferase from Ruegeria pomeroyi (strain ATCC 700808 / DSM 15171 / DSS-3) (Silicibacter pomeroyi).